The chain runs to 237 residues: Undecaprenyl-diphosphatase (237 aa).

Helical transmembrane passes span 38 to 58 (QTAVLHLGTLVSVVLFAFDGI), 65 to 85 (WRIILNLIVSTIPAGVFGVLF), 92 to 112 (LFSSPRFLPLFFSVTALILMF), 126 to 146 (MSFLDALLVGIAQLFALFPGI), 166 to 186 (ALQYSFLMSIPVVLGAGILGL), 191 to 211 (ITILAPIFAFLSGLFALYVLS), and 217 to 237 (GKIWQFSYYCLFVAILSYLVG).

This sequence belongs to the UppP family.

Its subcellular location is the cell inner membrane. The enzyme catalyses di-trans,octa-cis-undecaprenyl diphosphate + H2O = di-trans,octa-cis-undecaprenyl phosphate + phosphate + H(+). Catalyzes the dephosphorylation of undecaprenyl diphosphate (UPP). Confers resistance to bacitracin. In Thermotoga petrophila (strain ATCC BAA-488 / DSM 13995 / JCM 10881 / RKU-1), this protein is Undecaprenyl-diphosphatase.